A 39-amino-acid polypeptide reads, in one-letter code: Hementin (39 aa).

Requires a divalent metal cation as cofactor. As to expression, expressed mainly in the posterior salivary glands and, to a lesser extent, in the anterior salivary glands and secreted into the proboscis (at protein level).

The protein localises to the secreted. Inhibited by EDTA, cysteine, DTT and sodium phosphate. Partially inhibited by EGTA, citrate, Tris and glycine. Not inhibited by DFP, PMSF, iodoacetic acid and leupeptin. Requires sodium chloride concentrations higher than 0.15 M for activity. Metalloprotease with anticoagulant activity. Cleaves fibrinogen Aalpha (FGA), gamma (FGG) and Bbeta (FGB) chains after positions 'Asn-121', 'Lys-160' and 'Pro-102', respectively. Breaks down cross-linked and non-cross-linked fibrin clots. Prevents and reverts platelet aggregation induced by ADP and collagen. Prevents thrombin-induced platelet clotting. Does not affect plasma levels of coagulation factors prothrombin (F2), V (F5), VII (F7), VIII (F8), IX (F9), X (F10), XI (F11), XII (F12), plasma kallikrein (KLKB1) and kininogen-1 (KNG1). This chain is Hementin, found in Haementeria ghilianii (Amazon leech).